The primary structure comprises 476 residues: Aspartyl/glutamyl-tRNA(Asn/Gln) amidotransferase subunit B (476 aa).

Belongs to the GatB/GatE family. GatB subfamily. Heterotrimer of A, B and C subunits.

The enzyme catalyses L-glutamyl-tRNA(Gln) + L-glutamine + ATP + H2O = L-glutaminyl-tRNA(Gln) + L-glutamate + ADP + phosphate + H(+). The catalysed reaction is L-aspartyl-tRNA(Asn) + L-glutamine + ATP + H2O = L-asparaginyl-tRNA(Asn) + L-glutamate + ADP + phosphate + 2 H(+). Functionally, allows the formation of correctly charged Asn-tRNA(Asn) or Gln-tRNA(Gln) through the transamidation of misacylated Asp-tRNA(Asn) or Glu-tRNA(Gln) in organisms which lack either or both of asparaginyl-tRNA or glutaminyl-tRNA synthetases. The reaction takes place in the presence of glutamine and ATP through an activated phospho-Asp-tRNA(Asn) or phospho-Glu-tRNA(Gln). This is Aspartyl/glutamyl-tRNA(Asn/Gln) amidotransferase subunit B from Bacillus cytotoxicus (strain DSM 22905 / CIP 110041 / 391-98 / NVH 391-98).